A 101-amino-acid polypeptide reads, in one-letter code: Co-chaperonin GroES 1 (101 aa).

It belongs to the GroES chaperonin family. In terms of assembly, heptamer of 7 subunits arranged in a ring. Interacts with the chaperonin GroEL.

It is found in the cytoplasm. Together with the chaperonin GroEL, plays an essential role in assisting protein folding. The GroEL-GroES system forms a nano-cage that allows encapsulation of the non-native substrate proteins and provides a physical environment optimized to promote and accelerate protein folding. GroES binds to the apical surface of the GroEL ring, thereby capping the opening of the GroEL channel. This is Co-chaperonin GroES 1 from Rhodopirellula baltica (strain DSM 10527 / NCIMB 13988 / SH1).